Consider the following 240-residue polypeptide: Transposase for insertion sequence element IS3411 (240 aa).

One can recognise an Integrase catalytic domain in the interval 125-240 (VAERPDQLWV…RASMVFTKRR (116 aa)).

In terms of biological role, involved in the transposition of the insertion sequence. This chain is Transposase for insertion sequence element IS3411, found in Escherichia coli.